Reading from the N-terminus, the 478-residue chain is ATP synthase subunit beta (478 aa).

Residue 151 to 158 (GGAGVGKT) participates in ATP binding.

The protein belongs to the ATPase alpha/beta chains family. As to quaternary structure, F-type ATPases have 2 components, CF(1) - the catalytic core - and CF(0) - the membrane proton channel. CF(1) has five subunits: alpha(3), beta(3), gamma(1), delta(1), epsilon(1). CF(0) has three main subunits: a(1), b(2) and c(9-12). The alpha and beta chains form an alternating ring which encloses part of the gamma chain. CF(1) is attached to CF(0) by a central stalk formed by the gamma and epsilon chains, while a peripheral stalk is formed by the delta and b chains.

It is found in the cell inner membrane. The enzyme catalyses ATP + H2O + 4 H(+)(in) = ADP + phosphate + 5 H(+)(out). Its function is as follows. Produces ATP from ADP in the presence of a proton gradient across the membrane. The catalytic sites are hosted primarily by the beta subunits. This Azorhizobium caulinodans (strain ATCC 43989 / DSM 5975 / JCM 20966 / LMG 6465 / NBRC 14845 / NCIMB 13405 / ORS 571) protein is ATP synthase subunit beta.